Consider the following 1383-residue polypeptide: DNA-directed RNA polymerase subunit beta'' (1383 aa).

The Zn(2+) site is built by Cys-220, Cys-289, Cys-296, and Cys-299.

This sequence belongs to the RNA polymerase beta' chain family. RpoC2 subfamily. As to quaternary structure, in plastids the minimal PEP RNA polymerase catalytic core is composed of four subunits: alpha, beta, beta', and beta''. When a (nuclear-encoded) sigma factor is associated with the core the holoenzyme is formed, which can initiate transcription. It depends on Zn(2+) as a cofactor.

Its subcellular location is the plastid. It is found in the chloroplast. It carries out the reaction RNA(n) + a ribonucleoside 5'-triphosphate = RNA(n+1) + diphosphate. DNA-dependent RNA polymerase catalyzes the transcription of DNA into RNA using the four ribonucleoside triphosphates as substrates. In Oenothera elata subsp. hookeri (Hooker's evening primrose), this protein is DNA-directed RNA polymerase subunit beta''.